A 572-amino-acid polypeptide reads, in one-letter code: Zyxin (572 aa).

Residue Ala-2 is modified to N-acetylalanine. The interval 23–351 (QKKFGPVVAP…VRSPGAPGPL (329 aa)) is disordered. Composition is skewed to pro residues over residues 63–78 (IPPPPPEDFPLPPPPL) and 93–108 (FPPPPPPIEESFPPAP). Phosphoserine is present on residues Ser-116, Ser-142, Ser-143, Ser-169, and Ser-170. Residues 143–156 (SIDLEIDSLSSLLD) show a composition bias toward low complexity. Thr-179 carries the phosphothreonine modification. Positions 202 to 239 (SPSSSQPLPQVPAPAQSQTQFHVQPQPQPKPQVQLHVQ) are enriched in low complexity. Polar residues predominate over residues 240 to 252 (SQTQPVSLANTQP). Arg-253 is modified (asymmetric dimethylarginine). The span at 253-265 (RGPPASSPAPAPK) shows a compositional bias: pro residues. Phosphoserine is present on Ser-259. Position 265 is an N6-acetyllysine (Lys-265). Position 267 is a phosphoserine (Ser-267). The residue at position 270 (Thr-270) is a Phosphothreonine. The residue at position 272 (Lys-272) is an N6-acetyllysine. The residue at position 274 (Thr-274) is a Phosphothreonine. An N6-acetyllysine modification is found at Lys-279. Residues Ser-281, Ser-288, and Ser-308 each carry the phosphoserine modification. Polar residues predominate over residues 305–318 (GTGSPQPPSFTYAQ). Residues 319-330 (QREKPRVQEKQH) are compositionally biased toward basic and acidic residues. Phosphoserine is present on Ser-344. LIM zinc-binding domains lie at 384–443 (CGRC…TLEK), 444–503 (CNTC…YAPR), and 504–570 (CSVC…TARA).

It belongs to the zyxin/ajuba family. Interacts with HPV type 6 protein E6. Does not interact significantly with E6 proteins from HPV types 11, 16, or 18. Interacts, via the Pro-rich regions, with the EVH1 domains of ENAH, EVL and VASP. Interacts with the first LIM domain of TES. Interacts with NEBL (isoform 2). Interacts with SYNPO2. In terms of assembly, (Microbial infection) Interacts with human papillomavirus type 6/HPV6 protein E6. Does not interact significantly with E6 proteins from HPV types 11, 16, or 18.

It localises to the cytoplasm. The protein localises to the cytoskeleton. Its subcellular location is the nucleus. It is found in the cell junction. The protein resides in the focal adhesion. Adhesion plaque protein. Binds alpha-actinin and the CRP protein. Important for targeting TES and ENA/VASP family members to focal adhesions and for the formation of actin-rich structures. May be a component of a signal transduction pathway that mediates adhesion-stimulated changes in gene expression. This is Zyxin (ZYX) from Homo sapiens (Human).